Here is a 181-residue protein sequence, read N- to C-terminus: Endoglucanase (181 aa).

Residues cysteine 4 and cysteine 16 are joined by a disulfide bond. Aspartate 24 functions as the Nucleophile in the catalytic mechanism. Intrachain disulfides connect cysteine 30–cysteine 69, cysteine 32–cysteine 176, cysteine 65–cysteine 178, cysteine 72–cysteine 157, and cysteine 103–cysteine 113. The active-site Proton donor is the aspartate 132.

Digestive gland.

It carries out the reaction Endohydrolysis of (1-&gt;4)-beta-D-glucosidic linkages in cellulose, lichenin and cereal beta-D-glucans.. In terms of biological role, active towards the soluble carboxymethylcellulose (CMC). Possesses expansin activity too. This is Endoglucanase from Mytilus edulis (Blue mussel).